A 337-amino-acid polypeptide reads, in one-letter code: 1-aminocyclopropane-1-carboxylate deaminase (337 aa).

N6-(pyridoxal phosphate)lysine is present on Lys50. The active-site Nucleophile is the Ser77.

It belongs to the ACC deaminase/D-cysteine desulfhydrase family. Homotrimer. It depends on pyridoxal 5'-phosphate as a cofactor.

It catalyses the reaction 1-aminocyclopropane-1-carboxylate + H2O = 2-oxobutanoate + NH4(+). In terms of biological role, catalyzes a cyclopropane ring-opening reaction, the irreversible conversion of 1-aminocyclopropane-1-carboxylate (ACC) to ammonia and alpha-ketobutyrate. Allows growth on ACC as a nitrogen source. This Bradyrhizobium diazoefficiens (strain JCM 10833 / BCRC 13528 / IAM 13628 / NBRC 14792 / USDA 110) protein is 1-aminocyclopropane-1-carboxylate deaminase.